A 408-amino-acid polypeptide reads, in one-letter code: Aminoacylase-1 (408 aa).

Residue H76 coordinates Zn(2+). D78 is a catalytic residue. D109 is a Zn(2+) binding site. Residue E143 is the Proton acceptor of the active site. Zn(2+)-binding residues include E144, E172, and H379.

It belongs to the peptidase M20A family. In terms of assembly, homodimer. The cofactor is Zn(2+).

The protein resides in the cytoplasm. The enzyme catalyses an N-acyl-L-amino acid + H2O = an L-alpha-amino acid + a carboxylate. It catalyses the reaction an N-acetyl-L-cysteine-S-conjugate + H2O = an S-substituted L-cysteine + acetate. Functionally, involved in the hydrolysis of N-acylated or N-acetylated amino acids (except L-aspartate). The polypeptide is Aminoacylase-1 (acy1) (Dictyostelium discoideum (Social amoeba)).